The primary structure comprises 235 residues: Serine protease SplA (235 aa).

The N-terminal stretch at 1–35 (MNENVMVKGLTALTILTSLGFAENISNQPHSIAKA) is a signal peptide. Catalysis depends on charge relay system residues histidine 74, aspartate 113, and serine 189.

The protein belongs to the peptidase S1B family.

It is found in the secreted. The protein is Serine protease SplA (splA) of Staphylococcus aureus (strain MSSA476).